We begin with the raw amino-acid sequence, 247 residues long: Cell division protein ZapD (247 aa).

Belongs to the ZapD family. In terms of assembly, interacts with FtsZ.

Its subcellular location is the cytoplasm. Cell division factor that enhances FtsZ-ring assembly. Directly interacts with FtsZ and promotes bundling of FtsZ protofilaments, with a reduction in FtsZ GTPase activity. This Shigella dysenteriae serotype 1 (strain Sd197) protein is Cell division protein ZapD.